Consider the following 171-residue polypeptide: Glutathione peroxidase-like peroxiredoxin GPX3 (171 aa).

Cysteine 43 functions as the Cysteine sulfenic acid (-SOH) intermediate in the catalytic mechanism. A disulfide bridge connects residues cysteine 43 and cysteine 89.

The protein belongs to the glutathione peroxidase family. As to quaternary structure, interacts with CAP1 and probably YBP1.

It carries out the reaction a hydroperoxide + [thioredoxin]-dithiol = an alcohol + [thioredoxin]-disulfide + H2O. In terms of biological role, involved in oxidative stress response and redox homeostasis. Functions as a sensor and transducer of hydroperoxide stress. In response to hydroperoxide stress it oxidizes (activates) the transcription activator CAP1, which is involved in transcription activation of genes of the oxidative stress response pathway. May also play a direct role in hydroperoxide scavenging. The enzyme is not required for the glutaredoxin-mediated antioxidant function. In the presence of peroxides, GPX3 is directly oxidized at Cys-43 to form a cysteine sulfenic acid (-SOH). Cys-43-SOH then forms either an intramolecular disulfide bond (Cys-43 with Cys-89) or a transient, intermolecular disulfide bond with 'Cys-446' of CAP1, which is further resolved into a CAP1 intramolecular disulfide bond ('Cys-303' with 'Cys-598'), which causes its nuclear accumulation and activation, and a reduced Cys-43 in GPX3. Required for C.albicans-mediated macrophage killing. This Candida albicans (strain SC5314 / ATCC MYA-2876) (Yeast) protein is Glutathione peroxidase-like peroxiredoxin GPX3.